The chain runs to 493 residues: Glutamyl-tRNA(Gln) amidotransferase subunit A (493 aa).

Catalysis depends on charge relay system residues Lys-78 and Ser-158. The Acyl-ester intermediate role is filled by Ser-182.

It belongs to the amidase family. GatA subfamily. In terms of assembly, heterotrimer of A, B and C subunits.

It catalyses the reaction L-glutamyl-tRNA(Gln) + L-glutamine + ATP + H2O = L-glutaminyl-tRNA(Gln) + L-glutamate + ADP + phosphate + H(+). Its function is as follows. Allows the formation of correctly charged Gln-tRNA(Gln) through the transamidation of misacylated Glu-tRNA(Gln) in organisms which lack glutaminyl-tRNA synthetase. The reaction takes place in the presence of glutamine and ATP through an activated gamma-phospho-Glu-tRNA(Gln). The sequence is that of Glutamyl-tRNA(Gln) amidotransferase subunit A from Methylorubrum populi (strain ATCC BAA-705 / NCIMB 13946 / BJ001) (Methylobacterium populi).